The following is a 403-amino-acid chain: uncharacterized protein (403 aa).

2 helical membrane-spanning segments follow: residues 29–49 (FVIF…CGFL) and 55–75 (AFIA…FFGC).

Belongs to the chlamydial CPn_0129/CT_036/TC_0306 family.

The protein localises to the cell membrane. This is an uncharacterized protein from Chlamydia trachomatis serovar D (strain ATCC VR-885 / DSM 19411 / UW-3/Cx).